The primary structure comprises 106 residues: Nucleoid-associated protein Exig_0019 (106 aa).

Over residues 1–16 the composition is skewed to low complexity; it reads MRGMGNMNNMMKQMQK. Residues 1 to 23 form a disordered region; sequence MRGMGNMNNMMKQMQKMQKDMAK.

It belongs to the YbaB/EbfC family. In terms of assembly, homodimer.

Its subcellular location is the cytoplasm. It localises to the nucleoid. Binds to DNA and alters its conformation. May be involved in regulation of gene expression, nucleoid organization and DNA protection. This Exiguobacterium sibiricum (strain DSM 17290 / CCUG 55495 / CIP 109462 / JCM 13490 / 255-15) protein is Nucleoid-associated protein Exig_0019.